Consider the following 231-residue polypeptide: Cytochrome c oxidase subunit 2 (231 aa).

The Mitochondrial intermembrane segment spans residues 1 to 14 (MAHPAQLGLQNATS). A helical membrane pass occupies residues 15–45 (PIMEELIAFHDHALMIIFLISSLVLYIISLM). Residues 46–59 (LTTKLTHTSTMNAQ) are Mitochondrial matrix-facing. The helical transmembrane segment at 60–87 (EIEMVWTILPAIILIMIALPSLRILYMT) threads the bilayer. The Mitochondrial intermembrane portion of the chain corresponds to 88–231 (DEFNKPYLTL…WASYLYIVSL (144 aa)). The Cu cation site is built by H161, C196, E198, C200, H204, and M207. E198 is a binding site for Mg(2+).

It belongs to the cytochrome c oxidase subunit 2 family. Component of the cytochrome c oxidase (complex IV, CIV), a multisubunit enzyme composed of 14 subunits. The complex is composed of a catalytic core of 3 subunits MT-CO1, MT-CO2 and MT-CO3, encoded in the mitochondrial DNA, and 11 supernumerary subunits COX4I, COX5A, COX5B, COX6A, COX6B, COX6C, COX7A, COX7B, COX7C, COX8 and NDUFA4, which are encoded in the nuclear genome. The complex exists as a monomer or a dimer and forms supercomplexes (SCs) in the inner mitochondrial membrane with NADH-ubiquinone oxidoreductase (complex I, CI) and ubiquinol-cytochrome c oxidoreductase (cytochrome b-c1 complex, complex III, CIII), resulting in different assemblies (supercomplex SCI(1)III(2)IV(1) and megacomplex MCI(2)III(2)IV(2)). Found in a complex with TMEM177, COA6, COX18, COX20, SCO1 and SCO2. Interacts with TMEM177 in a COX20-dependent manner. Interacts with COX20. Interacts with COX16. The cofactor is Cu cation.

It localises to the mitochondrion inner membrane. It catalyses the reaction 4 Fe(II)-[cytochrome c] + O2 + 8 H(+)(in) = 4 Fe(III)-[cytochrome c] + 2 H2O + 4 H(+)(out). Its function is as follows. Component of the cytochrome c oxidase, the last enzyme in the mitochondrial electron transport chain which drives oxidative phosphorylation. The respiratory chain contains 3 multisubunit complexes succinate dehydrogenase (complex II, CII), ubiquinol-cytochrome c oxidoreductase (cytochrome b-c1 complex, complex III, CIII) and cytochrome c oxidase (complex IV, CIV), that cooperate to transfer electrons derived from NADH and succinate to molecular oxygen, creating an electrochemical gradient over the inner membrane that drives transmembrane transport and the ATP synthase. Cytochrome c oxidase is the component of the respiratory chain that catalyzes the reduction of oxygen to water. Electrons originating from reduced cytochrome c in the intermembrane space (IMS) are transferred via the dinuclear copper A center (CU(A)) of subunit 2 and heme A of subunit 1 to the active site in subunit 1, a binuclear center (BNC) formed by heme A3 and copper B (CU(B)). The BNC reduces molecular oxygen to 2 water molecules using 4 electrons from cytochrome c in the IMS and 4 protons from the mitochondrial matrix. The sequence is that of Cytochrome c oxidase subunit 2 (MT-CO2) from Lagothrix lagotricha (Brown woolly monkey).